The sequence spans 237 residues: Purine nucleoside phosphorylase DeoD-type (237 aa).

Residue histidine 4 participates in a purine D-ribonucleoside binding. Phosphate is bound by residues glycine 20, arginine 24, arginine 43, and 87 to 90 (RVGT). A purine D-ribonucleoside is bound by residues 179 to 181 (EME) and 203 to 204 (SD). Aspartate 204 functions as the Proton donor in the catalytic mechanism.

Belongs to the PNP/UDP phosphorylase family. In terms of assembly, homohexamer; trimer of homodimers.

It carries out the reaction a purine D-ribonucleoside + phosphate = a purine nucleobase + alpha-D-ribose 1-phosphate. The enzyme catalyses a purine 2'-deoxy-D-ribonucleoside + phosphate = a purine nucleobase + 2-deoxy-alpha-D-ribose 1-phosphate. In terms of biological role, catalyzes the reversible phosphorolytic breakdown of the N-glycosidic bond in the beta-(deoxy)ribonucleoside molecules, with the formation of the corresponding free purine bases and pentose-1-phosphate. This chain is Purine nucleoside phosphorylase DeoD-type, found in Exiguobacterium sp. (strain ATCC BAA-1283 / AT1b).